We begin with the raw amino-acid sequence, 713 residues long: BBSome complex assembly protein BBS10 (713 aa).

Belongs to the TCP-1 chaperonin family. As to quaternary structure, component of a complex composed at least of MKKS, BBS10, BBS12, TCP1, CCT2, CCT3, CCT4, CCT5 and CCT8.

It localises to the cell projection. Its subcellular location is the cilium. Functionally, probable molecular chaperone that assists the folding of proteins upon ATP hydrolysis. Plays a role in the assembly of BBSome, a complex involved in ciliogenesis regulating transports vesicles to the cilia. Involved in adipogenic differentiation. This is BBSome complex assembly protein BBS10 (Bbs10) from Mus musculus (Mouse).